Consider the following 504-residue polypeptide: Probable cytosol aminopeptidase (504 aa).

Lysine 274 and aspartate 279 together coordinate Mn(2+). Lysine 286 is a catalytic residue. Residues aspartate 297, aspartate 356, and glutamate 358 each coordinate Mn(2+). Arginine 360 is an active-site residue.

This sequence belongs to the peptidase M17 family. Mn(2+) is required as a cofactor.

It is found in the cytoplasm. It carries out the reaction Release of an N-terminal amino acid, Xaa-|-Yaa-, in which Xaa is preferably Leu, but may be other amino acids including Pro although not Arg or Lys, and Yaa may be Pro. Amino acid amides and methyl esters are also readily hydrolyzed, but rates on arylamides are exceedingly low.. The enzyme catalyses Release of an N-terminal amino acid, preferentially leucine, but not glutamic or aspartic acids.. Presumably involved in the processing and regular turnover of intracellular proteins. Catalyzes the removal of unsubstituted N-terminal amino acids from various peptides. In Gloeobacter violaceus (strain ATCC 29082 / PCC 7421), this protein is Probable cytosol aminopeptidase.